The primary structure comprises 102 residues: Small ribosomal subunit protein uS10 (102 aa).

This sequence belongs to the universal ribosomal protein uS10 family. In terms of assembly, part of the 30S ribosomal subunit.

Involved in the binding of tRNA to the ribosomes. The polypeptide is Small ribosomal subunit protein uS10 (Methylobacterium nodulans (strain LMG 21967 / CNCM I-2342 / ORS 2060)).